Here is a 1015-residue protein sequence, read N- to C-terminus: Collagen alpha-2(I) chain (1015 aa).

A disordered region spans residues 1 to 1015; sequence SGGFDFSFLP…FGYEGDFYRA (1015 aa). 4-hydroxyproline occurs at positions 10 and 13. Over residues 20–30 the composition is skewed to gly residues; that stretch reads KGVGLGPGPMG. 4-hydroxyproline is present on Pro38. Over residues 43–69 the composition is skewed to low complexity; the sequence is QGPAGEPGEPGQTGPAGARGPAGPPGK. The segment covering 70 to 84 has biased composition (basic and acidic residues); that stretch reads AGEDGHPGKPGRPGE. Lys106 bears the 5-hydroxylysine; alternate mark. A glycan (O-linked (Gal...) hydroxylysine; alternate) is linked at Lys106. Composition is skewed to low complexity over residues 140–169, 194–208, and 235–250; these read VGAP…SAGP, AGPR…VSGP, and PGPV…RGLV. Gly residues predominate over residues 302–311; it reads GLRGGPGSRG. Over residues 324–340 the composition is skewed to low complexity; the sequence is PAGSRGASGPAGVRGPS. 4-hydroxyproline occurs at positions 346 and 349. A compositionally biased stretch (gly residues) spans 441–450; the sequence is GVQGGKGEQG. A compositionally biased stretch (low complexity) spans 497–514; sequence PGESGAAGPVGPIGSRGP. Over residues 534 to 545 the composition is skewed to gly residues; that stretch reads GTAGPGSGGLPG. Composition is skewed to low complexity over residues 568-612 and 619-639; these read VGTT…PRGS and VGPA…QPGA. Residues 640 to 649 show a composition bias toward basic and acidic residues; the sequence is KGERGTKGPK. The span at 657–670 shows a compositional bias: low complexity; it reads PTGPVGAAGPSGPN. Gly residues predominate over residues 674 to 686; it reads GPAGGRGDGGPPG. Residues 687 to 697 are compositionally biased toward low complexity; it reads LTGFPGAAGRT. The span at 734–743 shows a compositional bias: gly residues; the sequence is GETGAGGPPG. Composition is skewed to low complexity over residues 751–778, 786–799, 846–868, and 877–897; these read SGEP…LGLP, LPGV…PGPL, YAGN…VGPA, and PGPA…PSGP. Basic and acidic residues predominate over residues 901-912; it reads RGDKGEAGDKGP. Residues 987-997 are compositionally biased toward pro residues; the sequence is PAGPPGPPGPP.

It belongs to the fibrillar collagen family. As to quaternary structure, trimers of one alpha 2(I) and two alpha 1(I) chains. Interacts (via C-terminus) with TMEM131 (via PapD-L domain); the interaction is direct and is involved in assembly and TRAPPIII ER-to-Golgi transport complex-dependent secretion of collagen. In terms of processing, prolines at the third position of the tripeptide repeating unit (G-X-Y) are hydroxylated in some or all of the chains. Expressed in bones.

The protein resides in the secreted. It is found in the extracellular space. The protein localises to the extracellular matrix. In terms of biological role, type I collagen is a member of group I collagen (fibrillar forming collagen). The sequence is that of Collagen alpha-2(I) chain from Doedicurus sp. (South American giant glyptodont).